We begin with the raw amino-acid sequence, 121 residues long: Large ribosomal subunit protein uL18 (121 aa).

The protein belongs to the universal ribosomal protein uL18 family. As to quaternary structure, part of the 50S ribosomal subunit; part of the 5S rRNA/L5/L18/L25 subcomplex. Contacts the 5S and 23S rRNAs.

This is one of the proteins that bind and probably mediate the attachment of the 5S RNA into the large ribosomal subunit, where it forms part of the central protuberance. This Streptococcus suis (strain 98HAH33) protein is Large ribosomal subunit protein uL18.